A 333-amino-acid polypeptide reads, in one-letter code: Adenosine deaminase (333 aa).

Zn(2+) is bound by residues H12 and H14. The substrate site is built by H14, D16, and G170. H197 contributes to the Zn(2+) binding site. The active-site Proton donor is E200. Position 278 (D278) interacts with Zn(2+). D279 lines the substrate pocket.

It belongs to the metallo-dependent hydrolases superfamily. Adenosine and AMP deaminases family. Adenosine deaminase subfamily. Zn(2+) serves as cofactor.

The enzyme catalyses adenosine + H2O + H(+) = inosine + NH4(+). It catalyses the reaction 2'-deoxyadenosine + H2O + H(+) = 2'-deoxyinosine + NH4(+). In terms of biological role, catalyzes the hydrolytic deamination of adenosine and 2-deoxyadenosine. This chain is Adenosine deaminase, found in Escherichia coli O81 (strain ED1a).